Here is a 671-residue protein sequence, read N- to C-terminus: Probable potassium transport system protein Kup 2 (671 aa).

12 helical membrane passes run 18-38 (GFLI…LYAM), 60-80 (VSLV…LIAL), 103-123 (WLII…ALTP), 146-166 (AVMV…RFGA), 173-193 (FGPI…INSF), 218-238 (AGFF…ALYS), 252-272 (WPFV…WLLA), 292-312 (MVIY…QALI), 343-363 (LYIP…VLYF), 373-393 (YSLA…YFLI), 402-422 (IAII…ASLV), and 424-444 (FING…VMFI).

Belongs to the HAK/KUP transporter (TC 2.A.72) family.

The protein localises to the cell membrane. The enzyme catalyses K(+)(in) + H(+)(in) = K(+)(out) + H(+)(out). Functionally, transport of potassium into the cell. Likely operates as a K(+):H(+) symporter. This is Probable potassium transport system protein Kup 2 from Lactococcus lactis subsp. lactis (strain IL1403) (Streptococcus lactis).